Here is a 303-residue protein sequence, read N- to C-terminus: MSIANDNPNARPVVVLGPTACGKTRLAVALARAFAGEVVSADSRQVFRGMDIGTGKDLQDYGDTPYHLIDIVDPGAPFSLFDYLGAMQRTLDDLDAREKRPIIAGGSGLYLDAILRGYRLVEAPVDPLLRERLKHHDQERLNALLASLRPLHNTTDTQDRERTLRAIEIAYAELNEDSPSVQISIDPVVIGLHCDNDRLRARIRERLETRLDEGLIEEVESLRAEGLSWRQLDELGLEYRYVALYLQEQLNRNDMMQKLASAIYLFARQQVKWFRRMERQGVAIHWLEADDAPLDNALALLRR.

17–24 (GPTACGKT) contributes to the ATP binding site. Residue 19–24 (TACGKT) participates in substrate binding. An interaction with substrate tRNA region spans residues 42-45 (DSRQ).

It belongs to the IPP transferase family. In terms of assembly, monomer. Requires Mg(2+) as cofactor.

It catalyses the reaction adenosine(37) in tRNA + dimethylallyl diphosphate = N(6)-dimethylallyladenosine(37) in tRNA + diphosphate. Its function is as follows. Catalyzes the transfer of a dimethylallyl group onto the adenine at position 37 in tRNAs that read codons beginning with uridine, leading to the formation of N6-(dimethylallyl)adenosine (i(6)A). The chain is tRNA dimethylallyltransferase 1 from Hahella chejuensis (strain KCTC 2396).